Consider the following 428-residue polypeptide: Tol-Pal system protein TolB (428 aa).

Positions 1 to 24 (MPSLKTLLRGVLVAAMLVAGSARA) are cleaved as a signal peptide.

The protein belongs to the TolB family. The Tol-Pal system is composed of five core proteins: the inner membrane proteins TolA, TolQ and TolR, the periplasmic protein TolB and the outer membrane protein Pal. They form a network linking the inner and outer membranes and the peptidoglycan layer.

It localises to the periplasm. Part of the Tol-Pal system, which plays a role in outer membrane invagination during cell division and is important for maintaining outer membrane integrity. The polypeptide is Tol-Pal system protein TolB (Chromobacterium violaceum (strain ATCC 12472 / DSM 30191 / JCM 1249 / CCUG 213 / NBRC 12614 / NCIMB 9131 / NCTC 9757 / MK)).